A 181-amino-acid polypeptide reads, in one-letter code: Oligoribonuclease (181 aa).

An Exonuclease domain is found at 8–171 (LIWIDLEMTG…DDIRESIAEL (164 aa)). Y129 is an active-site residue.

The protein belongs to the oligoribonuclease family.

It is found in the cytoplasm. Functionally, 3'-to-5' exoribonuclease specific for small oligoribonucleotides. This Vibrio vulnificus (strain CMCP6) protein is Oligoribonuclease.